Reading from the N-terminus, the 123-residue chain is Large ribosomal subunit protein bL17 (123 aa).

Belongs to the bacterial ribosomal protein bL17 family. In terms of assembly, part of the 50S ribosomal subunit. Contacts protein L32.

This Exiguobacterium sibiricum (strain DSM 17290 / CCUG 55495 / CIP 109462 / JCM 13490 / 255-15) protein is Large ribosomal subunit protein bL17.